Here is a 160-residue protein sequence, read N- to C-terminus: Putative UPF0479 protein YLR466C-A (160 aa).

The next 2 helical transmembrane spans lie at 39 to 59 and 136 to 156; these read IVFCLPFFPALFLVPVQKVLQ and VPMIWLDVFQVFFVFLVISQH.

This sequence belongs to the UPF0479 family.

Its subcellular location is the membrane. The polypeptide is Putative UPF0479 protein YLR466C-A (Saccharomyces cerevisiae (strain ATCC 204508 / S288c) (Baker's yeast)).